We begin with the raw amino-acid sequence, 160 residues long: Ribosomal RNA large subunit methyltransferase H (160 aa).

S-adenosyl-L-methionine-binding positions include Leu76, Gly108, and Leu127–Trp132.

The protein belongs to the RNA methyltransferase RlmH family. As to quaternary structure, homodimer.

It is found in the cytoplasm. The catalysed reaction is pseudouridine(1915) in 23S rRNA + S-adenosyl-L-methionine = N(3)-methylpseudouridine(1915) in 23S rRNA + S-adenosyl-L-homocysteine + H(+). Specifically methylates the pseudouridine at position 1915 (m3Psi1915) in 23S rRNA. This is Ribosomal RNA large subunit methyltransferase H from Rhizobium leguminosarum bv. trifolii (strain WSM2304).